Consider the following 315-residue polypeptide: Calumenin-B (315 aa).

The signal sequence occupies residues 1-19 (MEQWPLLFVVALCILQSSS). Over residues 22–39 (MEKKDRVHHDAPLSNKDH) the composition is skewed to basic and acidic residues. Positions 22–42 (MEKKDRVHHDAPLSNKDHDDE) are disordered. 6 EF-hand domains span residues 68–103 (ESKE…AQRR), 104–139 (WIYE…YILD), 151–186 (QMMT…EEFD), 188–223 (MKDI…QNGD), 229–264 (WVKT…ADYD), and 265–300 (HAEA…FVGS). Asp81, Asp83, Asp85, Glu92, Asp117, Asn119, Asp121, Glu128, Asp164, Asp166, Asp168, Arg170, Glu175, Asp201, Asn203, Asp205, Glu212, Asp242, Asn244, Asp246, Arg248, Glu253, Asp278, Asp280, Asp282, Arg284, and Glu289 together coordinate Ca(2+). The short motif at 312–315 (HDEF) is the Prevents secretion from ER element.

It belongs to the CREC family. Interacts with ggcx.

Its subcellular location is the endoplasmic reticulum membrane. It localises to the golgi apparatus. It is found in the secreted. The protein localises to the melanosome. The protein resides in the sarcoplasmic reticulum lumen. Functionally, involved in regulation of vitamin K-dependent carboxylation of multiple N-terminal glutamate residues. Seems to inhibit gamma-carboxylase ggcx. Binds 7 calcium ions with a low affinity. The sequence is that of Calumenin-B (calub) from Danio rerio (Zebrafish).